A 421-amino-acid chain; its full sequence is Probable acid phosphatase (421 aa).

Asp229 (proton donor) is an active-site residue.

It carries out the reaction a phosphate monoester + H2O = an alcohol + phosphate. The protein is Probable acid phosphatase of Kluyveromyces lactis (strain ATCC 8585 / CBS 2359 / DSM 70799 / NBRC 1267 / NRRL Y-1140 / WM37) (Yeast).